The primary structure comprises 141 residues: Endoribonuclease YbeY (141 aa).

Residues H105, H109, and D115 each coordinate Zn(2+).

This sequence belongs to the endoribonuclease YbeY family. The cofactor is Zn(2+).

The protein localises to the cytoplasm. Single strand-specific metallo-endoribonuclease involved in late-stage 70S ribosome quality control and in maturation of the 3' terminus of the 16S rRNA. The protein is Endoribonuclease YbeY of Chlorobaculum parvum (strain DSM 263 / NCIMB 8327) (Chlorobium vibrioforme subsp. thiosulfatophilum).